A 552-amino-acid chain; its full sequence is Hyaluronan synthase 2 (552 aa).

Over 1–11 the chain is Cytoplasmic; the sequence is MHCERFLCVLR. The helical transmembrane segment at 12–32 threads the bilayer; sequence IIGTTLFGVSLLLGITAAYIV. Residues 33–45 are Extracellular-facing; that stretch reads GYQFIQTDNYYFS. Residues 46–66 traverse the membrane as a helical segment; that stretch reads FGLYGAFLASHLIIQSLFAFL. Over 67–374 the chain is Cytoplasmic; it reads EHRKMKKSLE…NAMWFHKHHL (308 aa). Phosphothreonine is present on threonine 110. Lysine 190 is covalently cross-linked (Glycyl lysine isopeptide (Lys-Gly) (interchain with G-Cter in ubiquitin)). An O-linked (GlcNAc) serine glycan is attached at serine 221. A Phosphothreonine modification is found at threonine 328. The chain crosses the membrane as a helical span at residues 375 to 395; it reads WMTYEAVITGFFPFFLIATVI. Residues 396-402 are Extracellular-facing; that stretch reads QLFYRGK. The helical transmembrane segment at 403–423 threads the bilayer; sequence IWNILLFLLTVQLVGLIKSSF. The Cytoplasmic segment spans residues 424–429; it reads ASCLRG. Residues 430–450 traverse the membrane as a helical segment; sequence NIVMVFMSLYSVLYMSSLLPA. Topologically, residues 451–475 are extracellular; that stretch reads KMFAIATINKAGWGTSGRKTIVVNF. Residues 476–496 form a helical membrane-spanning segment; that stretch reads IGLIPVSVWFTILLGGVIFTI. The Cytoplasmic portion of the chain corresponds to 497–510; it reads YKESKKPFSESKQT. A helical transmembrane segment spans residues 511–531; it reads VLIVGTLIYACYWVMLLTLYV. Residues 532–552 are Extracellular-facing; that stretch reads VLINKCGRRKKGQQYDMVLDV.

Belongs to the NodC/HAS family. In terms of assembly, homodimer; dimerization promotes enzymatic activity. Forms heterodimer with HAS3. Forms heterodimer with HAS1. Mg(2+) serves as cofactor. Phosphorylation at Thr-328 is essential for hyaluronan synthase activity. Post-translationally, O-GlcNAcylation at Ser-221 increases the stability of HAS2 and plasma membrane localization. In terms of processing, ubiquitination at Lys-190; this ubiquitination is essential for hyaluronan synthase activity and homo- or hetero-oligomerization. Can also be poly-ubiquitinated. Deubiquitinated by USP17L22/USP17 and USP4. USP17L22/USP17 efficiently removes 'Lys-63'- and 'Lys-48'-linked polyubiquitin chains, whereas USP4 preferentially removes monoubiquitination and, partially, both 'Lys-63'- and 'Lys-48'-linked polyubiquitin chain. In terms of tissue distribution, expressed in heart, brain, spleen, lung and skeletal muscle.

It localises to the cell membrane. The protein localises to the endoplasmic reticulum membrane. The protein resides in the vesicle. Its subcellular location is the golgi apparatus membrane. It is found in the lysosome. It carries out the reaction [hyaluronan](n) + UDP-N-acetyl-alpha-D-glucosamine = N-acetyl-beta-D-glucosaminyl-(1-&gt;4)-[hyaluronan](n) + UDP + H(+). The catalysed reaction is N-acetyl-beta-D-glucosaminyl-(1-&gt;4)-[hyaluronan](n) + UDP-alpha-D-glucuronate = [hyaluronan](n+1) + UDP + H(+). Its pathway is glycan biosynthesis; hyaluronan biosynthesis. Functionally, catalyzes the addition of GlcNAc or GlcUA monosaccharides to the nascent hyaluronan polymer. Therefore, it is essential to hyaluronan synthesis a major component of most extracellular matrices that has a structural role in tissues architectures and regulates cell adhesion, migration and differentiation. This is one of the isozymes catalyzing that reaction and it is particularly responsible for the synthesis of high molecular mass hyaluronan. Required for the transition of endocardial cushion cells into mesenchymal cells, a process crucial for heart development. May also play a role in vasculogenesis. High molecular mass hyaluronan also play a role in early contact inhibition a process which stops cell growth when cells come into contact with each other or the extracellular matrix. Catalyzes the addition of GlcNAc or GlcUA monosaccharides to the nascent hyaluronan polymer. Therefore, it is essential to hyaluronan synthesis a major component of most extracellular matrices that has a structural role in tissues architectures and regulates cell adhesion, migration and differentiation. This is one of three isoenzymes responsible for cellular hyaluronan synthesis and it is particularly responsible for the synthesis of high molecular mass hyaluronan. The protein is Hyaluronan synthase 2 of Mus musculus (Mouse).